Here is a 170-residue protein sequence, read N- to C-terminus: Large ribosomal subunit protein uL5 (170 aa).

It belongs to the universal ribosomal protein uL5 family. As to quaternary structure, part of the 50S ribosomal subunit; contacts the 5S rRNA and probably tRNA. Forms a bridge to the 30S subunit in the 70S ribosome.

Its function is as follows. This is one of the proteins that bind and probably mediate the attachment of the 5S RNA into the large ribosomal subunit, where it forms part of the central protuberance. In the 70S ribosome it contacts protein S13 of the 30S subunit (bridge B1b), connecting the 2 subunits; this bridge is implicated in subunit movement. May contact the P site tRNA; the 5S rRNA and some of its associated proteins might help stabilize positioning of ribosome-bound tRNAs. The protein is Large ribosomal subunit protein uL5 of Methanobrevibacter smithii (strain ATCC 35061 / DSM 861 / OCM 144 / PS).